The sequence spans 522 residues: Subtilisin-like protease 10 (522 aa).

Residues 1–19 (MFFFKGVVAVLSFFSAVNA) form the signal peptide. Positions 20-117 (APFMKPNNGT…VERDQIGTSQ (98 aa)) are excised as a propeptide. One can recognise an Inhibitor I9 domain in the interval 36–113 (SYIVLLKRDI…HVAHVERDQI (78 aa)). The 279-residue stretch at 127–405 (NWGLGRLSNS…KLLVNGANGT (279 aa)) folds into the Peptidase S8 domain. Active-site charge relay system residues include Asp159 and His190. N-linked (GlcNAc...) asparagine glycosylation is present at Asn251. Ser348 functions as the Charge relay system in the catalytic mechanism. Positions 383–397 (SASVKNPGPNTTNKL) are enriched in polar residues. A disordered region spans residues 383–515 (SASVKNPGPN…GWNRPMWWNR (133 aa)). 2 N-linked (GlcNAc...) asparagine glycosylation sites follow: Asn392 and Asn403. Over residues 432-459 (SQNPPPGQNPPPGQNPPPEQPAPSPPAN) the composition is skewed to pro residues.

Belongs to the peptidase S8 family.

The protein localises to the secreted. Functionally, secreted subtilisin-like serine protease with keratinolytic activity that contributes to pathogenicity. The sequence is that of Subtilisin-like protease 10 (SUB10) from Trichophyton verrucosum (strain HKI 0517).